Here is a 219-residue protein sequence, read N- to C-terminus: Small ribosomal subunit protein uS3 (219 aa).

The KH type-2 domain maps to 39-107 (LRKFLKKKLH…EVLIDIQEVR (69 aa)).

The protein belongs to the universal ribosomal protein uS3 family. Part of the 30S ribosomal subunit. Forms a tight complex with proteins S10 and S14.

Functionally, binds the lower part of the 30S subunit head. Binds mRNA in the 70S ribosome, positioning it for translation. This Desulfatibacillum aliphaticivorans protein is Small ribosomal subunit protein uS3.